A 309-amino-acid polypeptide reads, in one-letter code: Pantoate--beta-alanine ligase (309 aa).

It belongs to the pantothenate synthetase family.

Its subcellular location is the cytoplasm. It localises to the nucleus. The catalysed reaction is (R)-pantoate + beta-alanine + ATP = (R)-pantothenate + AMP + diphosphate + H(+). Its pathway is cofactor biosynthesis; (R)-pantothenate biosynthesis; (R)-pantothenate from (R)-pantoate and beta-alanine: step 1/1. In terms of biological role, required for pantothenic acid biosynthesis. This is Pantoate--beta-alanine ligase (PAN6) from Saccharomyces cerevisiae (strain ATCC 204508 / S288c) (Baker's yeast).